Consider the following 252-residue polypeptide: 2-succinyl-6-hydroxy-2,4-cyclohexadiene-1-carboxylate synthase (252 aa).

Belongs to the AB hydrolase superfamily. MenH family. In terms of assembly, monomer.

It catalyses the reaction 5-enolpyruvoyl-6-hydroxy-2-succinyl-cyclohex-3-ene-1-carboxylate = (1R,6R)-6-hydroxy-2-succinyl-cyclohexa-2,4-diene-1-carboxylate + pyruvate. It participates in quinol/quinone metabolism; 1,4-dihydroxy-2-naphthoate biosynthesis; 1,4-dihydroxy-2-naphthoate from chorismate: step 3/7. The protein operates within quinol/quinone metabolism; menaquinone biosynthesis. Its function is as follows. Catalyzes a proton abstraction reaction that results in 2,5-elimination of pyruvate from 2-succinyl-5-enolpyruvyl-6-hydroxy-3-cyclohexene-1-carboxylate (SEPHCHC) and the formation of 2-succinyl-6-hydroxy-2,4-cyclohexadiene-1-carboxylate (SHCHC). The chain is 2-succinyl-6-hydroxy-2,4-cyclohexadiene-1-carboxylate synthase from Salmonella typhi.